A 542-amino-acid chain; its full sequence is MFS-type efflux pump MMF1 (542 aa).

8 helical membrane-spanning segments follow: residues 24 to 44 (WTIF…MTMI), 51 to 71 (IVAA…AFLL), 98 to 118 (VIFL…VLVV), 124 to 144 (GLGG…LTTL), 151 to 171 (FGLI…LGGV), 179 to 199 (WIFW…VLFL), 215 to 235 (LDLV…IAVT), and 248 to 268 (VWVP…VEWI). An N-linked (GlcNAc...) asparagine glycan is attached at Asn-285. 6 consecutive transmembrane segments (helical) span residues 296-316 (FLHG…FQAI), 326-346 (IWSF…GLLI), 355-375 (LIFI…HWSV), 384-404 (ISQI…LPPI), 419-439 (AYAF…TTIF), and 490-510 (ISDS…STFL).

Belongs to the major facilitator superfamily.

The protein localises to the cell membrane. In terms of biological role, glycosyltransferase; part of the gene cluster that mediates the biosynthesis of mannosylerythritol lipids (MELs), surface-active substances that enhance the availability of water-insoluble substrates. MMF1 is directly involved in the secretiopn of MALs. This is MFS-type efflux pump MMF1 from Pseudozyma antarctica (strain T-34) (Yeast).